Consider the following 171-residue polypeptide: tRNA-specific adenosine deaminase (171 aa).

One can recognise a CMP/dCMP-type deaminase domain in the interval 6–133; sequence EEQTYFMQEA…ERLNHRVQVE (128 aa). His57 lines the Zn(2+) pocket. Glu59 serves as the catalytic Proton donor. Residues Cys87 and Cys90 each contribute to the Zn(2+) site.

It belongs to the cytidine and deoxycytidylate deaminase family. In terms of assembly, homodimer. Zn(2+) is required as a cofactor.

It catalyses the reaction adenosine(34) in tRNA + H2O + H(+) = inosine(34) in tRNA + NH4(+). Functionally, catalyzes the deamination of adenosine to inosine at the wobble position 34 of tRNA(Arg2). The sequence is that of tRNA-specific adenosine deaminase from Streptococcus pyogenes serotype M3 (strain ATCC BAA-595 / MGAS315).